The chain runs to 89 residues: Protein FAM25A (89 aa).

This sequence belongs to the FAM25 family.

This is Protein FAM25A from Homo sapiens (Human).